The sequence spans 407 residues: 4-hydroxy-3-methylbut-2-en-1-yl diphosphate synthase (ferredoxin) (407 aa).

Positions 312, 315, 346, and 353 each coordinate [4Fe-4S] cluster.

Belongs to the IspG family. Requires [4Fe-4S] cluster as cofactor.

It catalyses the reaction (2E)-4-hydroxy-3-methylbut-2-enyl diphosphate + 2 oxidized [2Fe-2S]-[ferredoxin] + H2O = 2-C-methyl-D-erythritol 2,4-cyclic diphosphate + 2 reduced [2Fe-2S]-[ferredoxin] + H(+). Its pathway is isoprenoid biosynthesis; isopentenyl diphosphate biosynthesis via DXP pathway; isopentenyl diphosphate from 1-deoxy-D-xylulose 5-phosphate: step 5/6. Converts 2C-methyl-D-erythritol 2,4-cyclodiphosphate (ME-2,4cPP) into 1-hydroxy-2-methyl-2-(E)-butenyl 4-diphosphate. The polypeptide is 4-hydroxy-3-methylbut-2-en-1-yl diphosphate synthase (ferredoxin) (Synechococcus elongatus (strain ATCC 33912 / PCC 7942 / FACHB-805) (Anacystis nidulans R2)).